A 328-amino-acid polypeptide reads, in one-letter code: GTP cyclohydrolase MptA (328 aa).

The protein belongs to the GTP cyclohydrolase IV family. As to quaternary structure, homodimer. The cofactor is Fe(2+).

The enzyme catalyses GTP + H2O = 7,8-dihydroneopterin 2',3'-cyclic phosphate + formate + diphosphate + H(+). It participates in cofactor biosynthesis; 5,6,7,8-tetrahydromethanopterin biosynthesis. In terms of biological role, converts GTP to 7,8-dihydro-D-neopterin 2',3'-cyclic phosphate, the first intermediate in the biosynthesis of coenzyme methanopterin. The sequence is that of GTP cyclohydrolase MptA from Methanospirillum hungatei JF-1 (strain ATCC 27890 / DSM 864 / NBRC 100397 / JF-1).